The following is a 434-amino-acid chain: Enolase (434 aa).

Gln165 provides a ligand contact to (2R)-2-phosphoglycerate. Glu207 serves as the catalytic Proton donor. Positions 244, 291, and 318 each coordinate Mg(2+). (2R)-2-phosphoglycerate contacts are provided by Lys343, Arg372, Ser373, and Lys394. Lys343 acts as the Proton acceptor in catalysis.

The protein belongs to the enolase family. The cofactor is Mg(2+).

The protein localises to the cytoplasm. Its subcellular location is the secreted. It is found in the cell surface. The catalysed reaction is (2R)-2-phosphoglycerate = phosphoenolpyruvate + H2O. Its pathway is carbohydrate degradation; glycolysis; pyruvate from D-glyceraldehyde 3-phosphate: step 4/5. In terms of biological role, catalyzes the reversible conversion of 2-phosphoglycerate (2-PG) into phosphoenolpyruvate (PEP). It is essential for the degradation of carbohydrates via glycolysis. The protein is Enolase of Staphylococcus haemolyticus (strain JCSC1435).